The following is a 213-amino-acid chain: Large ribosomal subunit protein uL1 (213 aa).

Belongs to the universal ribosomal protein uL1 family. Part of the 50S ribosomal subunit.

In terms of biological role, binds directly to 23S rRNA. Probably involved in E site tRNA release. Its function is as follows. Protein L1 is also a translational repressor protein, it controls the translation of its operon by binding to its mRNA. The polypeptide is Large ribosomal subunit protein uL1 (Methanococcus maripaludis (strain C6 / ATCC BAA-1332)).